A 969-amino-acid chain; its full sequence is RNA polymerase-associated protein RapA (969 aa).

Residues Glu-164–Asp-334 form the Helicase ATP-binding domain. Asp-177 to Thr-184 serves as a coordination point for ATP. Residues Asp-280–His-283 carry the DEAH box motif. Residues Arg-492–Lys-679 enclose the Helicase C-terminal domain.

Belongs to the SNF2/RAD54 helicase family. RapA subfamily. As to quaternary structure, interacts with the RNAP. Has a higher affinity for the core RNAP than for the holoenzyme. Its ATPase activity is stimulated by binding to RNAP.

Its function is as follows. Transcription regulator that activates transcription by stimulating RNA polymerase (RNAP) recycling in case of stress conditions such as supercoiled DNA or high salt concentrations. Probably acts by releasing the RNAP, when it is trapped or immobilized on tightly supercoiled DNA. Does not activate transcription on linear DNA. Probably not involved in DNA repair. This chain is RNA polymerase-associated protein RapA, found in Vibrio atlanticus (strain LGP32) (Vibrio splendidus (strain Mel32)).